We begin with the raw amino-acid sequence, 742 residues long: Collectin-12 (742 aa).

Topologically, residues Met-1–Lys-37 are cytoplasmic. Residues Phe-38–Gly-58 traverse the membrane as a helical; Signal-anchor for type II membrane protein segment. The Extracellular segment spans residues Tyr-59 to Leu-742. Asn-67 carries an N-linked (GlcNAc...) asparagine glycan. A coiled-coil region spans residues Glu-73 to Ala-141. N-linked (GlcNAc...) asparagine glycosylation is found at Asn-159, Asn-168, and Asn-271. Residues Gln-215–Lys-328 adopt a coiled-coil conformation. The disordered stretch occupies residues Thr-439–Pro-608. Collagen-like domains are found at residues Gly-443–Lys-472, Gly-473–Pro-529, and Gly-530–Val-589. Low complexity-rich tracts occupy residues Lys-502–Asp-525 and Lys-534–Pro-556. The segment covering Pro-571–Pro-585 has biased composition (pro residues). 3 cysteine pairs are disulfide-bonded: Cys-607–Cys-618, Cys-635–Cys-730, and Cys-708–Cys-722. The 118-residue stretch at Phe-614–Glu-731 folds into the C-type lectin domain. 5 residues coordinate Ca(2+): Phe-644, Asn-646, Glu-650, Asp-670, and Glu-674. Residues Lys-691, Gln-694, and Asp-696 each coordinate a carbohydrate. Residues Gln-694, Asp-696, Asn-697, Glu-706, Asp-707, Asn-718, Asp-719, and Glu-731 each coordinate Ca(2+). An a carbohydrate-binding site is contributed by Glu-706. A carbohydrate-binding residues include Asn-718 and Asp-719.

The extracellular domain forms a stable trimer. The extracellular domain interacts with fibrillar amyloid-beta peptide. In terms of tissue distribution, expressed in perivascular macrophages. Expressed in plaques-surrounding reactive astrocytes and in perivascular astrocytes associated with cerebral amyloid angiopathy (CAA) in the temporal cortex of Alzheimer patient (at protein level). Strongly expressed in placenta. Moderately expressed in heart, skeletal muscle, small intestine and lung. Weakly expressed in brain, colon, thymus and kidney. Expressed in nurse-like cells. Expressed in reactive astrocytes and vascular/perivascular cells in the brain of Alzheimer patient.

It is found in the membrane. Scavenger receptor that displays several functions associated with host defense. Promotes binding and phagocytosis of Gram-positive, Gram-negative bacteria and yeast. Mediates the recognition, internalization and degradation of oxidatively modified low density lipoprotein (oxLDL) by vascular endothelial cells. Binds to several carbohydrates including Gal-type ligands, D-galactose, L- and D-fucose, GalNAc, T and Tn antigens in a calcium-dependent manner and internalizes specifically GalNAc in nurse-like cells. Also binds to sialyl Lewis X or a trisaccharide and asialo-orosomucoid (ASOR). May also play a role in the clearance of amyloid-beta in Alzheimer disease. This Homo sapiens (Human) protein is Collectin-12 (COLEC12).